The following is a 330-amino-acid chain: tRNA U34 carboxymethyltransferase (330 aa).

Residues Lys-91, Trp-105, Lys-110, Gly-130, 152–154 (DPS), 181–182 (IE), Met-196, Tyr-200, and Arg-315 contribute to the carboxy-S-adenosyl-L-methionine site.

The protein belongs to the class I-like SAM-binding methyltransferase superfamily. CmoB family. In terms of assembly, homotetramer.

It carries out the reaction carboxy-S-adenosyl-L-methionine + 5-hydroxyuridine(34) in tRNA = 5-carboxymethoxyuridine(34) in tRNA + S-adenosyl-L-homocysteine + H(+). Its function is as follows. Catalyzes carboxymethyl transfer from carboxy-S-adenosyl-L-methionine (Cx-SAM) to 5-hydroxyuridine (ho5U) to form 5-carboxymethoxyuridine (cmo5U) at position 34 in tRNAs. This is tRNA U34 carboxymethyltransferase from Shewanella amazonensis (strain ATCC BAA-1098 / SB2B).